The primary structure comprises 1066 residues: Isoleucine--tRNA ligase (1066 aa).

The short motif at 47–57 (PYTTGYIHLGT) is the 'HIGH' region element. A 'KMSKS' region motif is present at residues 594–598 (KMSKS). K597 contacts ATP.

The protein belongs to the class-I aminoacyl-tRNA synthetase family. IleS type 2 subfamily. In terms of assembly, monomer. Zn(2+) serves as cofactor.

The protein localises to the cytoplasm. It carries out the reaction tRNA(Ile) + L-isoleucine + ATP = L-isoleucyl-tRNA(Ile) + AMP + diphosphate. In terms of biological role, catalyzes the attachment of isoleucine to tRNA(Ile). As IleRS can inadvertently accommodate and process structurally similar amino acids such as valine, to avoid such errors it has two additional distinct tRNA(Ile)-dependent editing activities. One activity is designated as 'pretransfer' editing and involves the hydrolysis of activated Val-AMP. The other activity is designated 'posttransfer' editing and involves deacylation of mischarged Val-tRNA(Ile). This is Isoleucine--tRNA ligase from Methanocorpusculum labreanum (strain ATCC 43576 / DSM 4855 / Z).